A 652-amino-acid polypeptide reads, in one-letter code: ATP-dependent zinc metalloprotease FtsH 2 (652 aa).

Over 1 to 6 (MNKYRR) the chain is Cytoplasmic. Residues 7 to 27 (GLALGALALAVFILIGVGISM) traverse the membrane as a helical segment. Residues 28 to 108 (RATPQPVNLT…PAGNGAISAD (81 aa)) lie on the Extracellular side of the membrane. A helical membrane pass occupies residues 109–129 (LMLLLRILTIVAVGVVIFVLF). Over 130–652 (RRFGPSSIGT…RAAKPQIDRT (523 aa)) the chain is Cytoplasmic. 200-207 (GPPGTGKT) serves as a coordination point for ATP. Histidine 420 serves as a coordination point for Zn(2+). The active site involves glutamate 421. The Zn(2+) site is built by histidine 424 and aspartate 496.

The protein in the central section; belongs to the AAA ATPase family. In the C-terminal section; belongs to the peptidase M41 family. Homohexamer. Zn(2+) is required as a cofactor.

It localises to the cell membrane. Its function is as follows. Acts as a processive, ATP-dependent zinc metallopeptidase for both cytoplasmic and membrane proteins. Plays a role in the quality control of integral membrane proteins. In Sphaerobacter thermophilus (strain ATCC 49802 / DSM 20745 / KCCM 41009 / NCIMB 13125 / S 6022), this protein is ATP-dependent zinc metalloprotease FtsH 2.